A 137-amino-acid polypeptide reads, in one-letter code: MPTINQLVRKPRKSKVSKSKSPALNFGYNSMKKKATNNAAPQKRGVATRVGTMTPKKPNSALRKYARVRLSNLYEVTAYIPGIGHNLQEHSVVLIRGGRVKDLPGVRYHIIRGALDTAGVDGRMTSRSKYGTKAPKK.

Disordered regions lie at residues 1 to 22 (MPTINQLVRKPRKSKVSKSKSP) and 35 to 57 (ATNNAAPQKRGVATRVGTMTPKK). Residues 9–18 (RKPRKSKVSK) show a composition bias toward basic residues. The residue at position 102 (D102) is a 3-methylthioaspartic acid.

The protein belongs to the universal ribosomal protein uS12 family. As to quaternary structure, part of the 30S ribosomal subunit. Contacts proteins S8 and S17. May interact with IF1 in the 30S initiation complex.

Its function is as follows. With S4 and S5 plays an important role in translational accuracy. Functionally, interacts with and stabilizes bases of the 16S rRNA that are involved in tRNA selection in the A site and with the mRNA backbone. Located at the interface of the 30S and 50S subunits, it traverses the body of the 30S subunit contacting proteins on the other side and probably holding the rRNA structure together. The combined cluster of proteins S8, S12 and S17 appears to hold together the shoulder and platform of the 30S subunit. The chain is Small ribosomal subunit protein uS12 from Leuconostoc mesenteroides subsp. mesenteroides (strain ATCC 8293 / DSM 20343 / BCRC 11652 / CCM 1803 / JCM 6124 / NCDO 523 / NBRC 100496 / NCIMB 8023 / NCTC 12954 / NRRL B-1118 / 37Y).